Reading from the N-terminus, the 265-residue chain is Proline-rich protein 23B (265 aa).

The span at 1 to 18 shows a compositional bias: low complexity; sequence MVSRPRSPSAFPAPWWGQ. Disordered stretches follow at residues 1–49 and 226–265; these read MVSR…EDPA and PSSPLQPLPPSPCVGSPGPHARSPLPERPPCKARRRLFQA. Residues 226–237 are compositionally biased toward pro residues; sequence PSSPLQPLPPSP. Basic residues predominate over residues 256–265; the sequence is CKARRRLFQA.

The protein belongs to the PRR23 family.

In Homo sapiens (Human), this protein is Proline-rich protein 23B (PRR23B).